A 423-amino-acid polypeptide reads, in one-letter code: Histidine--tRNA ligase (423 aa).

Belongs to the class-II aminoacyl-tRNA synthetase family. In terms of assembly, homodimer.

It localises to the cytoplasm. The enzyme catalyses tRNA(His) + L-histidine + ATP = L-histidyl-tRNA(His) + AMP + diphosphate + H(+). The protein is Histidine--tRNA ligase of Halorhodospira halophila (strain DSM 244 / SL1) (Ectothiorhodospira halophila (strain DSM 244 / SL1)).